Consider the following 839-residue polypeptide: DNA (cytosine-5)-methyltransferase CMT3 (839 aa).

Disordered regions lie at residues 1 to 38 (MAPK…EPVT) and 51 to 86 (LDEP…KTKD). Positions 19–30 (PKPKKRAPKRAK) are enriched in basic residues. Residues 51 to 70 (LDEPIPESEAKSTWPDRYKP) show a composition bias toward basic and acidic residues. A BAH domain is found at 108–227 (QIYELNDDAY…LPYDTFEAIQ (120 aa)). The SAM-dependent MTase C5-type domain maps to 269–813 (ATLLDLYSGC…YALGTAFQGL (545 aa)). Residues 382 to 447 (FTVDKIVGIS…LGYKSGILPL (66 aa)) enclose the Chromo domain. Cys-460 is a catalytic residue.

It belongs to the class I-like SAM-binding methyltransferase superfamily. C5-methyltransferase family. Homodimer. Interacts with HP1 and, through its chromodomain, with the N-terminal tail of histone H3 doubly methylated at 'Lys-9' and 'Lys-27'. Binds to JMJ24. Post-translationally, ubiquitinated by JMJ24, subsequently beingargeted to proteasomal degradation thus initiating the destabilization of the heterochromatic state of endogenous silenced loci.

It localises to the nucleus. It catalyses the reaction a 2'-deoxycytidine in DNA + S-adenosyl-L-methionine = a 5-methyl-2'-deoxycytidine in DNA + S-adenosyl-L-homocysteine + H(+). Functionally, involved in the CpXpG methylation (e.g. CHG cytosine) and in gene silencing. Methylates preferentially transposon-related sequences. Functionally redundant to DRM1/DRM2 to maintain non-CpG methylation. Involved in RNA-directed DNA methylation. The polypeptide is DNA (cytosine-5)-methyltransferase CMT3 (Arabidopsis thaliana (Mouse-ear cress)).